The sequence spans 273 residues: Bis(5'-nucleosyl)-tetraphosphatase, symmetrical (273 aa).

The protein belongs to the Ap4A hydrolase family.

The catalysed reaction is P(1),P(4)-bis(5'-adenosyl) tetraphosphate + H2O = 2 ADP + 2 H(+). Its function is as follows. Hydrolyzes diadenosine 5',5'''-P1,P4-tetraphosphate to yield ADP. The protein is Bis(5'-nucleosyl)-tetraphosphatase, symmetrical of Aeromonas salmonicida (strain A449).